We begin with the raw amino-acid sequence, 453 residues long: Homogentisate 1,2-dioxygenase (453 aa).

The Proton acceptor role is filled by His-304. His-347 and Glu-353 together coordinate Fe cation. Homogentisate is bound by residues Tyr-362 and His-383. Residue His-383 coordinates Fe cation.

It belongs to the homogentisate dioxygenase family. In terms of assembly, hexamer; dimer of trimers. Fe cation is required as a cofactor.

The enzyme catalyses homogentisate + O2 = 4-maleylacetoacetate + H(+). It functions in the pathway amino-acid degradation; L-phenylalanine degradation; acetoacetate and fumarate from L-phenylalanine: step 4/6. Involved in the catabolism of homogentisate (2,5-dihydroxyphenylacetate or 2,5-OH-PhAc), a central intermediate in the degradation of phenylalanine and tyrosine. Catalyzes the oxidative ring cleavage of the aromatic ring of homogentisate to yield maleylacetoacetate. The polypeptide is Homogentisate 1,2-dioxygenase (Sinorhizobium fredii (strain NBRC 101917 / NGR234)).